An 807-amino-acid polypeptide reads, in one-letter code: Glycerol-3-phosphate acyltransferase (807 aa).

The short motif at 308-313 (CHRSHM) is the HXXXXD motif element.

The protein belongs to the GPAT/DAPAT family.

The protein localises to the cell inner membrane. The enzyme catalyses sn-glycerol 3-phosphate + an acyl-CoA = a 1-acyl-sn-glycero-3-phosphate + CoA. It functions in the pathway phospholipid metabolism; CDP-diacylglycerol biosynthesis; CDP-diacylglycerol from sn-glycerol 3-phosphate: step 1/3. In Shewanella putrefaciens (strain CN-32 / ATCC BAA-453), this protein is Glycerol-3-phosphate acyltransferase.